The primary structure comprises 263 residues: Follistatin-related protein 3 (263 aa).

Residues 1–26 (MRPGAPGPLWPLPWGALAWAVGFVSS) form the signal peptide. In terms of domain architecture, TB spans 36–107 (GVCWLQQGQE…SCDGVECGPG (72 aa)). 13 disulfide bridges follow: C38–C61, C48–C92, C62–C95, C99–C110, C104–C119, C121–C153, C125–C146, C135–C167, C171–C182, C176–C192, C195–C229, C200–C222, and C211–C243. N73 carries N-linked (GlcNAc...) asparagine glycosylation. One can recognise a Follistatin-like 1 domain in the interval 99 to 119 (CDGVECGPGKACRMLGGRPRC). In terms of domain architecture, Kazal-like 1 spans 113–169 (LGGRPRCECAPDCSGLPARLQVCGSDGATYRDECELRAARCRGHPDLSVMYRGRCRK). Residues 170 to 193 (SCEHVVCPRPQSCVVDQTGSAHCV) enclose the Follistatin-like 2 domain. One can recognise a Kazal-like 2 domain in the interval 189 to 245 (SAHCVVCRAAPCPVPSSPGQELCGNNNVTYISSCHMRQATCFLGRSIGVRHAGSCAG). The N-linked (GlcNAc...) asparagine glycan is linked to N215. Residues 242–263 (SCAGTPEEPPGGESAEEEENFV) form a disordered region. Phosphoserine; by FAM20C is present on S255.

In terms of assembly, interacts with INHBA and INHBB. Interacts with FN1. Interacts with ADAM12. Isoform 2 interacts with MLLT10; the interaction enhances MLLT10 in vitro transcriptional activity and self-association. Interacts with MSTN. As to expression, expressed in a wide range of tissues.

The protein resides in the secreted. Its subcellular location is the nucleus. Functionally, isoform 1 or the secreted form is a binding and antagonizing protein for members of the TGF-beta family, such as activin, BMP2 and MSTN. Inhibits activin A-, activin B-, BMP2- and MSDT-induced cellular signaling; more effective on activin A than on activin B. Involved in bone formation; inhibits osteoclast differentiation. Involved in hematopoiesis; involved in differentiation of hemopoietic progenitor cells, increases hematopoietic cell adhesion to fibronectin and seems to contribute to the adhesion of hematopoietic precursor cells to the bone marrow stroma. Isoform 2 or the nuclear form is probably involved in transcriptional regulation via interaction with MLLT10. In Homo sapiens (Human), this protein is Follistatin-related protein 3 (FSTL3).